The chain runs to 2399 residues: Protein DOP1A (2399 aa).

6 disordered regions span residues 556–598 (PSGQ…SSES), 619–660 (NGQG…GAAG), 1105–1124 (SDSG…EVDP), 1166–1188 (SVTS…PGKE), 1234–1263 (SPCI…HSSI), and 1279–1308 (ETIV…KKKA). 2 stretches are compositionally biased toward low complexity: residues 629-647 (GSTS…EETV) and 1105-1116 (SDSGCSQSSAGD). Composition is skewed to polar residues over residues 1166–1180 (SVTS…QTKS) and 1234–1252 (SPCI…VPSE). Ser1261 is subject to Phosphoserine.

Belongs to the DOP1 family.

Its subcellular location is the golgi apparatus membrane. Its function is as follows. May be involved in protein traffic between late Golgi and early endosomes. The protein is Protein DOP1A (Dop1a) of Mus musculus (Mouse).